Reading from the N-terminus, the 353-residue chain is 4-hydroxy-3-methylbut-2-en-1-yl diphosphate synthase (flavodoxin) (353 aa).

[4Fe-4S] cluster contacts are provided by C263, C266, C298, and E305.

This sequence belongs to the IspG family. [4Fe-4S] cluster serves as cofactor.

The catalysed reaction is (2E)-4-hydroxy-3-methylbut-2-enyl diphosphate + oxidized [flavodoxin] + H2O + 2 H(+) = 2-C-methyl-D-erythritol 2,4-cyclic diphosphate + reduced [flavodoxin]. It functions in the pathway isoprenoid biosynthesis; isopentenyl diphosphate biosynthesis via DXP pathway; isopentenyl diphosphate from 1-deoxy-D-xylulose 5-phosphate: step 5/6. Converts 2C-methyl-D-erythritol 2,4-cyclodiphosphate (ME-2,4cPP) into 1-hydroxy-2-methyl-2-(E)-butenyl 4-diphosphate. This is 4-hydroxy-3-methylbut-2-en-1-yl diphosphate synthase (flavodoxin) from Geobacter sulfurreducens (strain ATCC 51573 / DSM 12127 / PCA).